Here is a 194-residue protein sequence, read N- to C-terminus: Dof zinc finger protein DOF1.7 (194 aa).

Residues Leu-33–Lys-87 form a Dof-type zinc finger. Residues Cys-35, Cys-38, Cys-60, and Cys-63 each coordinate Zn(2+). The segment at Arg-74–Met-125 is disordered. Positions Arg-88–Asn-99 are enriched in low complexity. Positions Glu-104 to Ser-121 are enriched in basic and acidic residues.

It localises to the nucleus. Functionally, transcription factor that binds specifically to a 5'-AA[AG]G-3' consensus core sequence. The polypeptide is Dof zinc finger protein DOF1.7 (DOF1.7) (Arabidopsis thaliana (Mouse-ear cress)).